A 378-amino-acid chain; its full sequence is MARDYYGLLGVSRNASDADIKRAYRKLARELHPDINPDEAAQAKFKEISMAYEVLSDPEKRRIVDLGGDPMENAAASPSGFGGFGGLGDVFEAFFGGSSASRGPIGRVRPGSDSLLPMWLDLEECATGVTKQVTVDTAVLCDRCQGKGTNGDSAPIPCDTCGGRGEVQTVQRSLLGQMVTARPCPTCRGVGVVIPDPCCQCVGDGRVRARREITVKIPSGVGDGMRVRLAAQGEVGPGGGPAGDLYVEVHEQAHDIFVRDGDDLHCTVSVPMVDAALGTTITVDAILDGMSEIDISPGTQPGSVIELRGQGMPHLRSNTRGNLHVHVEVMVPTRLDQHDTELLRELKRRRSRDVAEVRSTHAAGGGLFSRLRETFTNR.

The J domain occupies 4 to 68 (DYYGLLGVSR…EKRRIVDLGG (65 aa)). The CR-type zinc finger occupies 128-210 (GVTKQVTVDT…CVGDGRVRAR (83 aa)). Residues C141, C144, C158, C161, C184, C187, C198, and C201 each coordinate Zn(2+). CXXCXGXG motif repeat units lie at residues 141–148 (CDRCQGKG), 158–165 (CDTCGGRG), 184–191 (CPTCRGVG), and 198–205 (CCQCVGDG).

This sequence belongs to the DnaJ family. In terms of assembly, homodimer. Zn(2+) is required as a cofactor.

It localises to the cytoplasm. Its function is as follows. Participates actively in the response to hyperosmotic and heat shock by preventing the aggregation of stress-denatured proteins and by disaggregating proteins, also in an autonomous, DnaK-independent fashion. Unfolded proteins bind initially to DnaJ; upon interaction with the DnaJ-bound protein, DnaK hydrolyzes its bound ATP, resulting in the formation of a stable complex. GrpE releases ADP from DnaK; ATP binding to DnaK triggers the release of the substrate protein, thus completing the reaction cycle. Several rounds of ATP-dependent interactions between DnaJ, DnaK and GrpE are required for fully efficient folding. Also involved, together with DnaK and GrpE, in the DNA replication of plasmids through activation of initiation proteins. This is Chaperone protein DnaJ 2 from Mycobacterium leprae (strain TN).